The chain runs to 134 residues: DNA-directed RNA polymerase subunit omega (134 aa).

Residues 76–102 are disordered; it reads EVDEPEPDPASMIAAGGAAAADSEEQD.

This sequence belongs to the RNA polymerase subunit omega family. As to quaternary structure, the RNAP catalytic core consists of 2 alpha, 1 beta, 1 beta' and 1 omega subunit. When a sigma factor is associated with the core the holoenzyme is formed, which can initiate transcription.

It carries out the reaction RNA(n) + a ribonucleoside 5'-triphosphate = RNA(n+1) + diphosphate. In terms of biological role, promotes RNA polymerase assembly. Latches the N- and C-terminal regions of the beta' subunit thereby facilitating its interaction with the beta and alpha subunits. In Rhizobium etli (strain ATCC 51251 / DSM 11541 / JCM 21823 / NBRC 15573 / CFN 42), this protein is DNA-directed RNA polymerase subunit omega.